A 344-amino-acid chain; its full sequence is Programmed cell death protein 2 (344 aa).

Zn(2+) contacts are provided by Cys135, Cys138, Cys146, Cys149, Cys155, His159, His168, and Cys172. The MYND-type; atypical zinc-finger motif lies at 135–172; it reads CRVCGCSGPKRCSRCHKAHYCSKEHQSLDWRLGHKQAC.

Post-translationally, ubiquitinated by PRKN, promoting proteasomal degradation.

Its subcellular location is the nucleus. Its function is as follows. May be a DNA-binding protein with a regulatory function. May play an important role in cell death and/or in regulation of cell proliferation. In Bos taurus (Bovine), this protein is Programmed cell death protein 2 (PDCD2).